The chain runs to 398 residues: Alpha-(1,3)-fucosyltransferase 4 (398 aa).

Over 1-15 (MRARWGRRGARRGGP) the chain is Cytoplasmic. A helical; Signal-anchor for type II membrane protein transmembrane segment spans residues 16–40 (GLPGTHLALLAASLLSSSVAIYVCW). Over 41 to 398 (KQLPPLPWAS…VPNLAGWFQQ (358 aa)) the chain is Lumenal. Asn-84, Asn-183, and Asn-311 each carry an N-linked (GlcNAc...) asparagine glycan.

Belongs to the glycosyltransferase 10 family.

The protein resides in the golgi apparatus. Its subcellular location is the golgi stack membrane. The catalysed reaction is a beta-D-galactosyl-(1-&gt;4)-N-acetyl-beta-D-glucosaminyl derivative + GDP-beta-L-fucose = a beta-D-galactosyl-(1-&gt;4)-[alpha-L-fucosyl-(1-&gt;3)]-N-acetyl-beta-D-glucosaminyl derivative + GDP + H(+). It carries out the reaction an N-acetyl-alpha-neuraminyl-(2-&gt;3)-beta-D-galactosyl-(1-&gt;4)-N-acetyl-beta-D-glucosaminyl derivative + GDP-beta-L-fucose = an alpha-Neu5Ac-(2-&gt;3)-beta-D-Gal-(1-&gt;4)-[alpha-L-Fuc-(1-&gt;3)]-beta-D-GlcNAc derivative + GDP + H(+). It catalyses the reaction an alpha-Neu5Ac-(2-&gt;3)-beta-D-Gal-(1-&gt;4)-beta-D-GlcNAc-(1-&gt;3)-beta-D-Gal-(1-&gt;4)-beta-D-GlcNAc derivative + GDP-beta-L-fucose = an alpha-Neu5Ac-(2-&gt;3)-beta-D-Gal-(1-&gt;4)-beta-D-GlcNAc-(1-&gt;3)-beta-D-Gal-(1-&gt;4)-[alpha-L-Fuc-(1-&gt;3)]-beta-D-GlcNAc derivative + GDP + H(+). The enzyme catalyses an alpha-Neu5Ac-(2-&gt;3)-beta-D-Gal-(1-&gt;4)-beta-D-GlcNAc6S derivative + GDP-beta-L-fucose = an alpha-Neu5Ac-(2-&gt;3)-beta-D-Gal-(1-&gt;4)-[alpha-L-Fuc-(1-&gt;3)]-beta-D-GlcNAc6S derivative + GDP + H(+). It functions in the pathway protein modification; protein glycosylation. Its function is as follows. Catalyzes alpha(1-&gt;3) linkage of fucosyl moiety transferred from GDP-beta-L-fucose to N-acetyl glucosamine (GlcNAc) within type 2 lactosamine (LacNAc, Gal-beta(1-&gt;4)GlcNAc) glycan attached to N- or O-linked glycoproteins. Robustly fucosylates nonsialylated distal LacNAc unit of the polylactosamine chain to form Lewis X antigen (CD15), a glycan determinant known to mediate important cellular functions in development and immunity. Fucosylates with lower efficiency sialylated LacNAc acceptors to form sialyl Lewis X and 6-sulfo sialyl Lewis X determinants that serve as recognition epitopes for C-type lectins. Together with FUT7 contributes to SELE, SELL and SELP selectin ligand biosynthesis and selectin-dependent lymphocyte homing, leukocyte migration and blood leukocyte homeostasis. In a cell type specific manner, may also fucosylate the internal LacNAc unit of the polylactosamine chain to form VIM-2 antigen that serves as recognition epitope for SELE. The sequence is that of Alpha-(1,3)-fucosyltransferase 4 (FUT4) from Bos taurus (Bovine).